The primary structure comprises 234 residues: MENQPKLNSSKEVIAFLAQRFPQCFSTEGEARPLKIGIFQDLVARMQGEENGLSKTQLRSALRLYTSSWRYLHGVKLGAERVDLDGNACGVLDEQHVEHARQQLEEAKARVQAQRDARKREAAENGEKREPRRPRPAGKKPTARRDGEQGSKEVRKPRAAKATSERKPRAKSETTEQRSTPVTSLEQLHLGQTVKVSAGKHAMEASVLEITKDGVRVQLSNGLAMIVRTEHLQF.

Basic and acidic residues predominate over residues 104-130 (LEEAKARVQAQRDARKREAAENGEKRE). Residues 104 to 186 (LEEAKARVQA…QRSTPVTSLE (83 aa)) are disordered. Positions 131 to 142 (PRRPRPAGKKPT) are enriched in basic residues. Basic and acidic residues-rich tracts occupy residues 143 to 156 (ARRD…EVRK) and 163 to 176 (TSER…ETTE). Polar residues predominate over residues 177-186 (QRSTPVTSLE).

The protein belongs to the ProQ family.

Its subcellular location is the cytoplasm. In terms of biological role, RNA chaperone with significant RNA binding, RNA strand exchange and RNA duplexing activities. May regulate ProP activity through an RNA-based, post-transcriptional mechanism. The polypeptide is RNA chaperone ProQ (Edwardsiella ictaluri (strain 93-146)).